Reading from the N-terminus, the 198-residue chain is Ribosome maturation factor RimP (198 aa).

Belongs to the RimP family.

The protein resides in the cytoplasm. In terms of biological role, required for maturation of 30S ribosomal subunits. The protein is Ribosome maturation factor RimP of Rhizobium etli (strain CIAT 652).